A 239-amino-acid polypeptide reads, in one-letter code: MADASIEFKGTSFTLSVLHLKTSKLADIRADLVKKVAQAPDFFYLVPVVVNIEQLDCSIDYQAVKTLIEEFNFTFVGFTGSVDKEQRKLIRELGFSFVNTTRVDTSQKAAIAEKAIVAESKVTAAIPECNLYTDKVHRGQIRSGQQIYAKDQNLVVIGSVSAGAEVIADGNIHVYGSLRGRAIAGAKGHHKAQIYCQNLEAELVSINGNYWLSESMEQHWGSPVYIHLTDSELTSSKLI.

This sequence belongs to the MinC family. As to quaternary structure, interacts with MinD and FtsZ.

Cell division inhibitor that blocks the formation of polar Z ring septums. Rapidly oscillates between the poles of the cell to destabilize FtsZ filaments that have formed before they mature into polar Z rings. Prevents FtsZ polymerization. This is Probable septum site-determining protein MinC from Colwellia psychrerythraea (strain 34H / ATCC BAA-681) (Vibrio psychroerythus).